Here is a 340-residue protein sequence, read N- to C-terminus: Selenide, water dikinase (340 aa).

Cysteine 13 is a catalytic residue. Residues lysine 16 and 43-45 contribute to the ATP site; that span reads ASD. Aspartate 46 provides a ligand contact to Mg(2+). ATP is bound by residues aspartate 63, aspartate 86, and 133 to 135; that span reads GHS. A Mg(2+)-binding site is contributed by aspartate 86. Aspartate 221 is a binding site for Mg(2+).

It belongs to the selenophosphate synthase 1 family. Class I subfamily. In terms of assembly, homodimer. Mg(2+) serves as cofactor.

The catalysed reaction is hydrogenselenide + ATP + H2O = selenophosphate + AMP + phosphate + 2 H(+). Functionally, synthesizes selenophosphate from selenide and ATP. The protein is Selenide, water dikinase of Desulfitobacterium hafniense (strain DSM 10664 / DCB-2).